A 22-amino-acid polypeptide reads, in one-letter code: Heat shock 70-related protein 1, mitochondrial (22 aa).

This sequence belongs to the heat shock protein 70 family.

It localises to the mitochondrion. The polypeptide is Heat shock 70-related protein 1, mitochondrial (Leishmania tarentolae (Sauroleishmania tarentolae)).